We begin with the raw amino-acid sequence, 313 residues long: 4-hydroxy-3-methylbut-2-enyl diphosphate reductase (313 aa).

Cys20 provides a ligand contact to [4Fe-4S] cluster. Positions 49 and 82 each coordinate (2E)-4-hydroxy-3-methylbut-2-enyl diphosphate. His49 and His82 together coordinate dimethylallyl diphosphate. Isopentenyl diphosphate is bound by residues His49 and His82. [4Fe-4S] cluster is bound at residue Cys104. His132 contacts (2E)-4-hydroxy-3-methylbut-2-enyl diphosphate. Residue His132 coordinates dimethylallyl diphosphate. His132 is an isopentenyl diphosphate binding site. The Proton donor role is filled by Glu134. Thr172 serves as a coordination point for (2E)-4-hydroxy-3-methylbut-2-enyl diphosphate. Cys201 is a [4Fe-4S] cluster binding site. (2E)-4-hydroxy-3-methylbut-2-enyl diphosphate-binding residues include Ser229, Ser230, Asn231, and Ser273. 4 residues coordinate dimethylallyl diphosphate: Ser229, Ser230, Asn231, and Ser273. The isopentenyl diphosphate site is built by Ser229, Ser230, Asn231, and Ser273.

The protein belongs to the IspH family. It depends on [4Fe-4S] cluster as a cofactor.

It carries out the reaction isopentenyl diphosphate + 2 oxidized [2Fe-2S]-[ferredoxin] + H2O = (2E)-4-hydroxy-3-methylbut-2-enyl diphosphate + 2 reduced [2Fe-2S]-[ferredoxin] + 2 H(+). It catalyses the reaction dimethylallyl diphosphate + 2 oxidized [2Fe-2S]-[ferredoxin] + H2O = (2E)-4-hydroxy-3-methylbut-2-enyl diphosphate + 2 reduced [2Fe-2S]-[ferredoxin] + 2 H(+). It participates in isoprenoid biosynthesis; dimethylallyl diphosphate biosynthesis; dimethylallyl diphosphate from (2E)-4-hydroxy-3-methylbutenyl diphosphate: step 1/1. Its pathway is isoprenoid biosynthesis; isopentenyl diphosphate biosynthesis via DXP pathway; isopentenyl diphosphate from 1-deoxy-D-xylulose 5-phosphate: step 6/6. Functionally, catalyzes the conversion of 1-hydroxy-2-methyl-2-(E)-butenyl 4-diphosphate (HMBPP) into a mixture of isopentenyl diphosphate (IPP) and dimethylallyl diphosphate (DMAPP). Acts in the terminal step of the DOXP/MEP pathway for isoprenoid precursor biosynthesis. This chain is 4-hydroxy-3-methylbut-2-enyl diphosphate reductase, found in Desulfotalea psychrophila (strain LSv54 / DSM 12343).